Here is a 307-residue protein sequence, read N- to C-terminus: Lipoyl synthase (307 aa).

Cys-55, Cys-60, Cys-66, Cys-81, Cys-85, Cys-88, and Ser-292 together coordinate [4Fe-4S] cluster. A Radical SAM core domain is found at Trp-67–Ser-281.

It belongs to the radical SAM superfamily. Lipoyl synthase family. Requires [4Fe-4S] cluster as cofactor.

The protein resides in the cytoplasm. It catalyses the reaction [[Fe-S] cluster scaffold protein carrying a second [4Fe-4S](2+) cluster] + N(6)-octanoyl-L-lysyl-[protein] + 2 oxidized [2Fe-2S]-[ferredoxin] + 2 S-adenosyl-L-methionine + 4 H(+) = [[Fe-S] cluster scaffold protein] + N(6)-[(R)-dihydrolipoyl]-L-lysyl-[protein] + 4 Fe(3+) + 2 hydrogen sulfide + 2 5'-deoxyadenosine + 2 L-methionine + 2 reduced [2Fe-2S]-[ferredoxin]. The protein operates within protein modification; protein lipoylation via endogenous pathway; protein N(6)-(lipoyl)lysine from octanoyl-[acyl-carrier-protein]: step 2/2. Catalyzes the radical-mediated insertion of two sulfur atoms into the C-6 and C-8 positions of the octanoyl moiety bound to the lipoyl domains of lipoate-dependent enzymes, thereby converting the octanoylated domains into lipoylated derivatives. In Mycobacterium avium (strain 104), this protein is Lipoyl synthase.